A 123-amino-acid chain; its full sequence is Defensin beta 118 (123 aa).

Residues 1–19 form the signal peptide; that stretch reads MKLLLLALPMLVLLPQVIP. 3 disulfides stabilise this stretch: C27/C54, C34/C48, and C38/C55. The propeptide occupies 65 to 123; it reads VPTTSPTPLSDSTRGVIDDILTVRFTTDYFEVSSKKNMVEESEVGQGTQTSLPNVHHSS. A disordered region spans residues 100–123; that stretch reads KNMVEESEVGQGTQTSLPNVHHSS. A compositionally biased stretch (polar residues) spans 109–123; the sequence is GQGTQTSLPNVHHSS.

It belongs to the beta-defensin family. Post-translationally, the three-dimensional structure formed by the three intramolecular disulfide bridges is indispensable for antimicrobial activity.

Its subcellular location is the secreted. In terms of biological role, host defense peptide that exhibits antimicrobial activity against both Gram-negative bacteria, such as E.coli and S.typhimurium, and Gram-positive bacteria, such as S.aureus and B.subtilis. Inhibits cell adhesion of E.coli on intestinal epithelial enterocytes. Causes rapid permeabilization of both the outer and inner membrane of E.coli, leading to morphological alterations on the bacterial surface. Binds to bacterial lipopolysaccharides (LPS) with high affinity, and may thereby be involved in immunoregulation through LPS neutralization. May contribute to epididymal innate immunity and protect the sperm against attack by microorganisms. The chain is Defensin beta 118 (DEFB118) from Pongo pygmaeus (Bornean orangutan).